A 403-amino-acid polypeptide reads, in one-letter code: Imidazolonepropionase (403 aa).

2 residues coordinate Fe(3+): His69 and His71. Zn(2+) contacts are provided by His69 and His71. Arg78, Tyr141, and His174 together coordinate 4-imidazolone-5-propanoate. An N-formimidoyl-L-glutamate-binding site is contributed by Tyr141. His239 is a Fe(3+) binding site. His239 contributes to the Zn(2+) binding site. Gln242 lines the 4-imidazolone-5-propanoate pocket. Asp314 serves as a coordination point for Fe(3+). Asp314 contributes to the Zn(2+) binding site. N-formimidoyl-L-glutamate is bound by residues Asn316 and Gly318. Ser319 contributes to the 4-imidazolone-5-propanoate binding site.

Belongs to the metallo-dependent hydrolases superfamily. HutI family. Zn(2+) serves as cofactor. It depends on Fe(3+) as a cofactor.

It localises to the cytoplasm. The enzyme catalyses 4-imidazolone-5-propanoate + H2O = N-formimidoyl-L-glutamate. Its pathway is amino-acid degradation; L-histidine degradation into L-glutamate; N-formimidoyl-L-glutamate from L-histidine: step 3/3. Catalyzes the hydrolytic cleavage of the carbon-nitrogen bond in imidazolone-5-propanoate to yield N-formimidoyl-L-glutamate. It is the third step in the universal histidine degradation pathway. This Legionella pneumophila (strain Paris) protein is Imidazolonepropionase.